A 435-amino-acid polypeptide reads, in one-letter code: MKYFIKTYGCQMNINDSEKIKGILQTQGYEPATREEDADLVILNTCTIREKPDQKVWSHLGEIKKLKSINPNIKIGVCGCMAQRAGYEIASKMPFIDLVFGTKNIHHMPKLLEDVKVGNRAIEILEEEDPSENILDSYPTVRDNSYCAYVTIMRGCDKECTYCVVPFTRGKERSRNPQSILDEVKSLVDSGVMEIHLIGQNVTAYGKDIDYPFYKLLENISKIEGVKRIRFTTGHPIDMTDDIIETMANLPNMVNHLHLPFQAGSDRILELMKRNYTKAYYLNRIEKLKAKIKDITFSTDIIIGFPTETEEDFQHTLDVVQTVEFEQVFSFKYSKRPNTPAYYMEDDLTDEIKTDRIKRLLEIQKAITSKLMQRYKNTVQKVLVEDKKGNTYIGRTTTNVWCNITSSQDILGKEVEVLIAKAGFQSLDGVVQNIL.

One can recognise an MTTase N-terminal domain in the interval methionine 1–valine 117. Positions 10, 46, 80, 156, 160, and 163 each coordinate [4Fe-4S] cluster. The 229-residue stretch at arginine 142 to lysine 370 folds into the Radical SAM core domain. The region spanning glutamine 373–asparagine 433 is the TRAM domain.

The protein belongs to the methylthiotransferase family. MiaB subfamily. In terms of assembly, monomer. It depends on [4Fe-4S] cluster as a cofactor.

It is found in the cytoplasm. It carries out the reaction N(6)-dimethylallyladenosine(37) in tRNA + (sulfur carrier)-SH + AH2 + 2 S-adenosyl-L-methionine = 2-methylsulfanyl-N(6)-dimethylallyladenosine(37) in tRNA + (sulfur carrier)-H + 5'-deoxyadenosine + L-methionine + A + S-adenosyl-L-homocysteine + 2 H(+). Its function is as follows. Catalyzes the methylthiolation of N6-(dimethylallyl)adenosine (i(6)A), leading to the formation of 2-methylthio-N6-(dimethylallyl)adenosine (ms(2)i(6)A) at position 37 in tRNAs that read codons beginning with uridine. This chain is tRNA-2-methylthio-N(6)-dimethylallyladenosine synthase, found in Hydrogenobaculum sp. (strain Y04AAS1).